The sequence spans 390 residues: Chorismate synthase (390 aa).

The NADP(+) site is built by arginine 48 and arginine 54. Residues 132-134, 244-245, glycine 289, 304-308, and arginine 330 each bind FMN; these read RSS, NA, and KPTSS. The tract at residues 362–390 is disordered; it reads VGAHPAGAHPAGADPAGTHPGGPGGFQPG. Over residues 363-379 the composition is skewed to low complexity; sequence GAHPAGAHPAGADPAGT. Gly residues predominate over residues 380-390; it reads HPGGPGGFQPG.

It belongs to the chorismate synthase family. Homotetramer. Requires FMNH2 as cofactor.

The enzyme catalyses 5-O-(1-carboxyvinyl)-3-phosphoshikimate = chorismate + phosphate. It participates in metabolic intermediate biosynthesis; chorismate biosynthesis; chorismate from D-erythrose 4-phosphate and phosphoenolpyruvate: step 7/7. Its function is as follows. Catalyzes the anti-1,4-elimination of the C-3 phosphate and the C-6 proR hydrogen from 5-enolpyruvylshikimate-3-phosphate (EPSP) to yield chorismate, which is the branch point compound that serves as the starting substrate for the three terminal pathways of aromatic amino acid biosynthesis. This reaction introduces a second double bond into the aromatic ring system. The chain is Chorismate synthase from Methylobacterium sp. (strain 4-46).